A 111-amino-acid polypeptide reads, in one-letter code: Probable 4-amino-4-deoxy-L-arabinose-phosphoundecaprenol flippase subunit ArnE (111 aa).

Topologically, residues Met1 to Ala37 are cytoplasmic. The chain crosses the membrane as a helical span at residues Leu38 to Leu58. Residues Leu40 to Ser109 enclose the EamA domain. Over Gln59–Asn60 the chain is Periplasmic. The helical transmembrane segment at Val61–Ala81 threads the bilayer. The Cytoplasmic portion of the chain corresponds to Val82–Glu87. A helical transmembrane segment spans residues Pro88–Gly108. At Ser109–Val111 the chain is on the periplasmic side.

The protein belongs to the ArnE family. Heterodimer of ArnE and ArnF.

It is found in the cell inner membrane. It functions in the pathway bacterial outer membrane biogenesis; lipopolysaccharide biosynthesis. Translocates 4-amino-4-deoxy-L-arabinose-phosphoundecaprenol (alpha-L-Ara4N-phosphoundecaprenol) from the cytoplasmic to the periplasmic side of the inner membrane. The polypeptide is Probable 4-amino-4-deoxy-L-arabinose-phosphoundecaprenol flippase subunit ArnE (Escherichia coli (strain 55989 / EAEC)).